The chain runs to 269 residues: Type II iodothyronine deiodinase (269 aa).

The Lumenal portion of the chain corresponds to 1–9 (MGILSVDLL). A helical; Signal-anchor for type III membrane protein membrane pass occupies residues 10–34 (ITLQILPVFFSNCLFLALYDSVILL). Topologically, residues 35-269 (KHVVLLLSRS…KNFSKRUKKT (235 aa)) are cytoplasmic. Sec-133 is an active-site residue. Residues Sec-133 and Sec-266 are each a non-standard amino acid (selenocysteine).

This sequence belongs to the iodothyronine deiodinase family. As to quaternary structure, predominantly monomer. Can form homodimers but homodimerization is not essential for enzyme activity. Interacts with USP20 and USP33. Interacts with MARCHF6. Post-translationally, ubiquitinated by MARCHF6, leading to its degradation by the proteasome. Deubiquitinated by USP20 and USP33. More expressed in pituitary than in brain, low to undetectable levels in thyroid and skeletal muscle.

Its subcellular location is the endoplasmic reticulum membrane. It catalyses the reaction 3,3',5-triiodo-L-thyronine + iodide + A + H(+) = L-thyroxine + AH2. The enzyme catalyses 3,3'-diiodo-L-thyronine + iodide + A + H(+) = 3,3',5'-triiodo-L-thyronine + AH2. The catalysed reaction is 3'-iodo-L-thyronine + iodide + A + H(+) = 3',5'-diiodo-L-thyronine + AH2. It carries out the reaction 3,3'-diiodothyronamine + iodide + A + H(+) = 3,3',5'-triiodothyronamine + AH2. It catalyses the reaction 3'-iodothyronamine + iodide + A + H(+) = 3',5'-diiodothyronamine + AH2. In terms of biological role, plays a crucial role in the metabolism of thyroid hormones (TH) and has specific roles in TH activation and inactivation by deiodination.Catalyzes the deiodination of L-thyroxine (T4) to 3,5,3'-triiodothyronine (T3) and 3,3',5'-triiodothyronine (rT3) to 3,3'-diiodothyronine (3,3'-T2) via outer-ring deiodination (ORD). Catalyzes the deiodination of 3',5'-diiodothyronine (3',5'-T2) to 3'-monoiodothyronine (3'-T1) via ORD. Catalyzes the phenolic ring deiodinations of 3,3',5'-triiodothyronamine and 3',5'- diiodothyronamine. The polypeptide is Type II iodothyronine deiodinase (DIO2) (Sus scrofa (Pig)).